The sequence spans 443 residues: Tubulin beta chain (443 aa).

Residues glutamine 11, glutamate 69, serine 138, glycine 142, threonine 143, glycine 144, asparagine 204, and asparagine 226 each contribute to the GTP site. Glutamate 69 contributes to the Mg(2+) binding site. Positions 421–443 are disordered; it reads EYQQYQDASAEEEGEFGEEEEEN. Residues 429 to 443 show a composition bias toward acidic residues; it reads SAEEEGEFGEEEEEN.

It belongs to the tubulin family. In terms of assembly, dimer of alpha and beta chains. A typical microtubule is a hollow water-filled tube with an outer diameter of 25 nm and an inner diameter of 15 nM. Alpha-beta heterodimers associate head-to-tail to form protofilaments running lengthwise along the microtubule wall with the beta-tubulin subunit facing the microtubule plus end conferring a structural polarity. Microtubules usually have 13 protofilaments but different protofilament numbers can be found in some organisms and specialized cells. Mg(2+) is required as a cofactor.

It is found in the cytoplasm. The protein localises to the cytoskeleton. Its function is as follows. Tubulin is the major constituent of microtubules, a cylinder consisting of laterally associated linear protofilaments composed of alpha- and beta-tubulin heterodimers. Microtubules grow by the addition of GTP-tubulin dimers to the microtubule end, where a stabilizing cap forms. Below the cap, tubulin dimers are in GDP-bound state, owing to GTPase activity of alpha-tubulin. The protein is Tubulin beta chain (TUBB1) of Polytomella agilis (Quadriflagellate alga).